The sequence spans 192 residues: Transcription termination/antitermination protein NusG (192 aa).

In terms of domain architecture, KOW spans 140–168 (VGEIVTVTDGPFETFMGTVEEIDQEKNRL).

Belongs to the NusG family.

In terms of biological role, participates in transcription elongation, termination and antitermination. This Rickettsia conorii (strain ATCC VR-613 / Malish 7) protein is Transcription termination/antitermination protein NusG.